The following is a 109-amino-acid chain: Aquaporin-2 (109 aa).

Topologically, residues 1 to 6 are cytoplasmic; that stretch reads SIAFSR. A helical membrane pass occupies residues 7–27; sequence AVLSEFLATLLFVFFGLGSAL. Over 28 to 35 the chain is Extracellular; it reads NWPQALPS. A helical transmembrane segment spans residues 36 to 54; sequence VLQIAMAFGLAIGTLVQTL. The Cytoplasmic portion of the chain corresponds to 55-59; it reads GHISG. The segment at residues 60-69 is an intramembrane region (discontinuously helical); that stretch reads AHINPAVTIA. Positions 63-65 match the NPA 1 motif; sequence NPA. Residues 70–80 lie on the Cytoplasmic side of the membrane; that stretch reads CLVGCHVSFLR. A helical membrane pass occupies residues 81-102; the sequence is ALFYLAAQLLGAVAGAALLHEL. The Extracellular portion of the chain corresponds to 103-109; it reads TPPDIRG.

Belongs to the MIP/aquaporin (TC 1.A.8) family. Homotetramer. In terms of processing, serine phosphorylation is necessary and sufficient for expression at the apical membrane. Endocytosis is not phosphorylation-dependent. Post-translationally, N-glycosylated.

The protein resides in the apical cell membrane. Its subcellular location is the basolateral cell membrane. It localises to the cell membrane. The protein localises to the cytoplasmic vesicle membrane. It is found in the golgi apparatus. The protein resides in the trans-Golgi network membrane. The enzyme catalyses H2O(in) = H2O(out). The catalysed reaction is glycerol(in) = glycerol(out). Functionally, forms a water-specific channel that provides the plasma membranes of renal collecting duct with high permeability to water, thereby permitting water to move in the direction of an osmotic gradient. Plays an essential role in renal water homeostasis. Could also be permeable to glycerol. This Procavia capensis habessinica (Abyssinian hyrax) protein is Aquaporin-2.